The following is a 36-amino-acid chain: uncharacterized protein (36 aa).

This is an uncharacterized protein from Treponema pallidum (strain Nichols).